The chain runs to 327 residues: Urease accessory protein UreD (327 aa).

The protein belongs to the UreD family. In terms of assembly, ureD, UreF and UreG form a complex that acts as a GTP-hydrolysis-dependent molecular chaperone, activating the urease apoprotein by helping to assemble the nickel containing metallocenter of UreC. The UreE protein probably delivers the nickel.

Its subcellular location is the cytoplasm. Required for maturation of urease via the functional incorporation of the urease nickel metallocenter. This is Urease accessory protein UreD from Yersinia enterocolitica serotype O:8 / biotype 1B (strain NCTC 13174 / 8081).